The chain runs to 885 residues: Putative membrane protein YdgH (885 aa).

Transmembrane regions (helical) follow at residues 9 to 29, 181 to 201, 202 to 222, 227 to 247, 278 to 298, 304 to 324, and 354 to 374; these read WAIA…SPNL, IIGL…PIVV, VGFS…NVDF, FTQT…CILL, ISGF…FAIF, VAVG…LFMV, and VARP…FILT. The interval 498-518 is disordered; sequence MAGQTGSASNGGSGGSLGDAA. The next 5 membrane-spanning stretches (helical) occupy residues 716–736, 740–760, 772–792, 817–837, and 847–867; these read MVIM…SMIM, MIAS…LIFV, VPFF…IFLL, VIIT…PSGV, and IIIG…PAII.

The protein belongs to the resistance-nodulation-cell division (RND) (TC 2.A.6) family. MmpL subfamily.

Its subcellular location is the cell membrane. This is Putative membrane protein YdgH (ydgH) from Bacillus subtilis (strain 168).